The primary structure comprises 605 residues: Probable potassium transport system protein Kup 3 (605 aa).

Helical transmembrane passes span Ala16–Phe36, Ile49–Ala69, Val97–Ile117, Gly138–Val158, Phe170–Phe190, Gly212–Leu232, Ala247–Ile267, Leu287–Ile307, Ile339–Phe359, Ala368–Phe388, Ala397–Lys417, and Leu418–Ile438.

It belongs to the HAK/KUP transporter (TC 2.A.72) family.

The protein localises to the cell inner membrane. It carries out the reaction K(+)(in) + H(+)(in) = K(+)(out) + H(+)(out). In terms of biological role, transport of potassium into the cell. Likely operates as a K(+):H(+) symporter. This chain is Probable potassium transport system protein Kup 3, found in Geobacter sulfurreducens (strain ATCC 51573 / DSM 12127 / PCA).